Reading from the N-terminus, the 460-residue chain is Argininosuccinate lyase (460 aa).

The protein belongs to the lyase 1 family. Argininosuccinate lyase subfamily.

It is found in the cytoplasm. The enzyme catalyses 2-(N(omega)-L-arginino)succinate = fumarate + L-arginine. It participates in amino-acid biosynthesis; L-arginine biosynthesis; L-arginine from L-ornithine and carbamoyl phosphate: step 3/3. This Streptococcus uberis (strain ATCC BAA-854 / 0140J) protein is Argininosuccinate lyase.